We begin with the raw amino-acid sequence, 55 residues long: Ferredoxin-1 (55 aa).

2 consecutive 4Fe-4S ferredoxin-type domains span residues 2 to 27 (YKIEETCISCGACAAECPVNAIEQGD) and 28 to 55 (TIFVVNADTCIDCGNCANVCPVGAPVAE). [4Fe-4S] cluster is bound by residues C8, C11, C14, C18, C37, C40, C43, and C47.

The cofactor is [4Fe-4S] cluster.

In terms of biological role, ferredoxins are iron-sulfur proteins that transfer electrons in a wide variety of metabolic reactions. The protein is Ferredoxin-1 of Rhodospirillum rubrum.